Here is a 422-residue protein sequence, read N- to C-terminus: Carboxypeptidase B2 (422 aa).

Positions 1-21 (MKLHGLGILVAIILYEQHGFA) are cleaved as a signal peptide. A propeptide spans 22–113 (FQSGQVLSAL…QTFNDTVSPR (92 aa)) (activation peptide). N-linked (GlcNAc...) asparagine glycans are attached at residues Asn43, Asn72, Asn84, and Asn107. In terms of domain architecture, Peptidase M14 spans 121–418 (QYHSLNEIYS…AAISKIVWHV (298 aa)). Cys177 and Cys190 are joined by a disulfide. Residues His180 and Glu183 each contribute to the Zn(2+) site. Residues 180-183 (HARE) and Arg238 each bind substrate. Asn240 carries N-linked (GlcNAc...) asparagine glycosylation. Cystine bridges form between Cys249-Cys273 and Cys264-Cys278. 255–256 (NR) serves as a coordination point for substrate. His309 provides a ligand contact to Zn(2+). 310 to 311 (SY) provides a ligand contact to substrate. Asn322 carries an N-linked (GlcNAc...) asparagine glycan. Tyr362 is a substrate binding site. The active-site Proton donor/acceptor is Glu384.

Belongs to the peptidase M14 family. Zn(2+) is required as a cofactor. Plasma; synthesized in the liver.

The protein localises to the secreted. The enzyme catalyses Release of C-terminal Arg and Lys from a polypeptide.. With respect to regulation, TAFI/CPB2 is unique among carboxypeptidases in that it spontaneously inactivates with a short half-life, a property that is crucial for its role in controlling blood clot lysis. The zymogen is stabilized by interactions with the activation peptide. Release of the activation peptide increases a dynamic flap mobility and in time this leads to conformational changes that disrupt the catalytic site and expose a cryptic thrombin-cleavage site present at Arg-323. Functionally, cleaves C-terminal arginine or lysine residues from biologically active peptides such as kinins or anaphylatoxins in the circulation thereby regulating their activities. Down-regulates fibrinolysis by removing C-terminal lysine residues from fibrin that has already been partially degraded by plasmin. The sequence is that of Carboxypeptidase B2 (Cpb2) from Mus musculus (Mouse).